A 200-amino-acid polypeptide reads, in one-letter code: Charged multivesicular body protein 6-A (200 aa).

Gly2 carries the N-myristoyl glycine lipid modification. The stretch at 9–102 forms a coiled coil; that stretch reads RRSRVTEQDK…FAQIEMKVIE (94 aa). Positions 166–200 are disordered; sequence EDLELPEAPSEPLPDTIPEKQAVKNKPKPQMIAAS. The Type-2 MIT-interacting motif motif lies at 168–179; the sequence is LELPEAPSEPLP.

It belongs to the SNF7 family. As to quaternary structure, probable core component of the endosomal sorting required for transport complex III (ESCRT-III). ESCRT-III components are thought to multimerize to form a flat lattice on the perimeter membrane of the endosome.

The protein localises to the endomembrane system. It localises to the late endosome membrane. In terms of biological role, probable core component of the endosomal sorting required for transport complex III (ESCRT-III) which is involved in multivesicular bodies (MVBs) formation and sorting of endosomal cargo proteins into MVBs. MVBs contain intraluminal vesicles (ILVs) that are generated by invagination and scission from the limiting membrane of the endosome and mostly are delivered to lysosomes enabling degradation of membrane proteins, such as stimulated growth factor receptors, lysosomal enzymes and lipids. In the ESCRT-III complex, it probably serves as an acceptor for the ESCRT-II complex on endosomal membranes. This chain is Charged multivesicular body protein 6-A (chmp6-a), found in Xenopus laevis (African clawed frog).